Here is a 314-residue protein sequence, read N- to C-terminus: DNA-directed RNA polymerase subunit alpha (314 aa).

Residues 1–227 (MTKFEIECVE…ELLHPLKEIN (227 aa)) form an alpha N-terminal domain (alpha-NTD) region. The tract at residues 241–314 (KINQILIEEL…LPKEKTVKPN (74 aa)) is alpha C-terminal domain (alpha-CTD).

The protein belongs to the RNA polymerase alpha chain family. In plastids the minimal PEP RNA polymerase catalytic core is composed of four subunits: alpha, beta, beta', and beta''. When a (nuclear-encoded) sigma factor is associated with the core the holoenzyme is formed, which can initiate transcription.

The protein localises to the plastid. Its subcellular location is the chloroplast. The enzyme catalyses RNA(n) + a ribonucleoside 5'-triphosphate = RNA(n+1) + diphosphate. In terms of biological role, DNA-dependent RNA polymerase catalyzes the transcription of DNA into RNA using the four ribonucleoside triphosphates as substrates. This is DNA-directed RNA polymerase subunit alpha from Rhodomonas salina (Cryptomonas salina).